A 421-amino-acid chain; its full sequence is Shaggy-related protein kinase kappa (421 aa).

Gly residues predominate over residues 1–10 (MASSGLGNGV). Positions 1-60 (MASSGLGNGVGTSRSAKGLKSSSSSVDWLTRDLAETRIRDKVETDDERDSEPDIIDGAGA) are disordered. Over residues 29–42 (LTRDLAETRIRDKV) the composition is skewed to basic and acidic residues. Over residues 43–54 (ETDDERDSEPDI) the composition is skewed to acidic residues. One can recognise a Protein kinase domain in the interval 83–367 (YISEHVVGTG…ALEACIHPLF (285 aa)). Residues 89-97 (VGTGSFGMV) and lysine 112 contribute to the ATP site. Catalysis depends on aspartate 208, which acts as the Proton acceptor. Tyrosine 243 bears the Phosphotyrosine mark.

The protein belongs to the protein kinase superfamily. CMGC Ser/Thr protein kinase family. GSK-3 subfamily. In terms of processing, autophosphorylated mainly on threonine and serine residues. As to expression, expressed exclusively in inflorescences.

It catalyses the reaction L-seryl-[protein] + ATP = O-phospho-L-seryl-[protein] + ADP + H(+). The enzyme catalyses L-threonyl-[protein] + ATP = O-phospho-L-threonyl-[protein] + ADP + H(+). In terms of biological role, may mediate extracellular signals to regulate transcription in differentiating cells. This is Shaggy-related protein kinase kappa (ASK10) from Arabidopsis thaliana (Mouse-ear cress).